The following is a 410-amino-acid chain: Multifunctional CCA protein (410 aa).

Residues glycine 8 and arginine 11 each contribute to the ATP site. Glycine 8 and arginine 11 together coordinate CTP. Mg(2+)-binding residues include glutamate 21 and aspartate 23. ATP-binding residues include arginine 91, arginine 137, and arginine 140. CTP is bound by residues arginine 91, arginine 137, and arginine 140. Residues 228 to 329 (TGIHVMMALR…LKLFDRLDVW (102 aa)) enclose the HD domain.

Belongs to the tRNA nucleotidyltransferase/poly(A) polymerase family. Bacterial CCA-adding enzyme type 1 subfamily. As to quaternary structure, monomer. Can also form homodimers and oligomers. Mg(2+) is required as a cofactor. Requires Ni(2+) as cofactor.

The catalysed reaction is a tRNA precursor + 2 CTP + ATP = a tRNA with a 3' CCA end + 3 diphosphate. The enzyme catalyses a tRNA with a 3' CCA end + 2 CTP + ATP = a tRNA with a 3' CCACCA end + 3 diphosphate. Functionally, catalyzes the addition and repair of the essential 3'-terminal CCA sequence in tRNAs without using a nucleic acid template. Adds these three nucleotides in the order of C, C, and A to the tRNA nucleotide-73, using CTP and ATP as substrates and producing inorganic pyrophosphate. tRNA 3'-terminal CCA addition is required both for tRNA processing and repair. Also involved in tRNA surveillance by mediating tandem CCA addition to generate a CCACCA at the 3' terminus of unstable tRNAs. While stable tRNAs receive only 3'-terminal CCA, unstable tRNAs are marked with CCACCA and rapidly degraded. This is Multifunctional CCA protein from Tolumonas auensis (strain DSM 9187 / NBRC 110442 / TA 4).